Reading from the N-terminus, the 259-residue chain is MPIVEDRLFRKIKKLTGKAIGDFNLIEEGDRIAVAVSGGKDSWTLLHILDSLRRRAPIRYELIAVNVDPGFPGYRTDIMEAHLREYGFANRMERTDCATIIKEKLRPGSSFCAFCARLRRGVLYSVATELGCNKLALGHHLDDFVETLLLNQFYVGTLAAMSPKLLADNGQHTVIRPMVYVEESDVAAFAEANGLPAIPCGCPEETRSDQNRQRMKRLVSQLAEDIPHLRSSLIGALGNVQPRHLLDASLKDFGTAAAD.

The PP-loop motif motif lies at Ser37–Ser42. Positions 112, 115, and 202 each coordinate [4Fe-4S] cluster.

It belongs to the TtcA family. As to quaternary structure, homodimer. Mg(2+) is required as a cofactor. [4Fe-4S] cluster serves as cofactor.

It localises to the cytoplasm. It catalyses the reaction cytidine(32) in tRNA + S-sulfanyl-L-cysteinyl-[cysteine desulfurase] + AH2 + ATP = 2-thiocytidine(32) in tRNA + L-cysteinyl-[cysteine desulfurase] + A + AMP + diphosphate + H(+). It functions in the pathway tRNA modification. In terms of biological role, catalyzes the ATP-dependent 2-thiolation of cytidine in position 32 of tRNA, to form 2-thiocytidine (s(2)C32). The sulfur atoms are provided by the cysteine/cysteine desulfurase (IscS) system. This is tRNA-cytidine(32) 2-sulfurtransferase from Syntrophotalea carbinolica (strain DSM 2380 / NBRC 103641 / GraBd1) (Pelobacter carbinolicus).